We begin with the raw amino-acid sequence, 612 residues long: Rhamnogalacturonan exolyase YesX (612 aa).

A substrate-binding site is contributed by N119. 6 residues coordinate Ca(2+): D120, D125, D127, D129, E131, and E133. 3 residues coordinate substrate: D139, E154, and R174. Positions 189, 191, 193, 195, and 197 each coordinate Ca(2+). 2 residues coordinate substrate: G205 and R222. H330, D336, D338, D340, K342, E344, D353, H354, H366, D368, D374, D376, R379, G381, E383, and E389 together coordinate Ca(2+). R419 lines the substrate pocket. Ca(2+) contacts are provided by D472, D474, V476, and E478. 516–518 provides a ligand contact to substrate; sequence NGT. 7 residues coordinate Ca(2+): N527, F529, D531, R533, E535, N576, and A578. Y579 serves as a coordination point for substrate. N580 lines the Ca(2+) pocket.

It belongs to the polysaccharide lyase 11 family. Monomer. Requires Mn(2+) as cofactor. It depends on Zn(2+) as a cofactor. Co(2+) serves as cofactor. The cofactor is Ca(2+).

The protein resides in the secreted. It catalyses the reaction Exotype eliminative cleavage of alpha-L-rhamnopyranosyl-(1-&gt;4)-alpha-D-galactopyranosyluronic acid bonds of rhamnogalacturonan I oligosaccharides containing alpha-L-rhamnopyranose at the reducing end and 4-deoxy-4,5-unsaturated D-galactopyranosyluronic acid at the non-reducing end. The products are the disaccharide 2-O-(4-deoxy-beta-L-threo-hex-4-enopyranuronosyl)-alpha-L-rhamnopyranose and the shortened rhamnogalacturonan oligosaccharide containing one 4-deoxy-4,5-unsaturated D-galactopyranosyluronic acid at the non-reducing end.. Its function is as follows. Pectinolytic enzyme that degrades type I rhamnogalacturonan from plant cell walls and releases disaccharide products. Degrades rhamnogalacturonan, polygalacturonic acid and pectic acid. Has very low activity on pectin. This is Rhamnogalacturonan exolyase YesX (yesX) from Bacillus subtilis (strain 168).